The chain runs to 508 residues: Potassium/proton antiporter CemA (508 aa).

5 helical membrane passes run 66–86 (LFII…LNLL), 282–302 (YQAL…WIIS), 386–406 (ILHL…FILG), 433–453 (ILLL…EVVI), and 468–488 (IISC…KYWI).

It belongs to the CemA family.

It localises to the plastid. Its subcellular location is the chloroplast inner membrane. It carries out the reaction K(+)(in) + H(+)(out) = K(+)(out) + H(+)(in). Functionally, contributes to K(+)/H(+) antiport activity by supporting proton efflux to control proton extrusion and homeostasis in chloroplasts in a light-dependent manner to modulate photosynthesis. Prevents excessive induction of non-photochemical quenching (NPQ) under continuous-light conditions. Indirectly promotes efficient inorganic carbon uptake into chloroplasts. This chain is Potassium/proton antiporter CemA, found in Anthoceros angustus (Hornwort).